The following is a 354-amino-acid chain: D-alanine--D-alanine ligase (354 aa).

The 195-residue stretch at 154-348 folds into the ATP-grasp domain; it reads RSWFLTNNIN…FTNLIEEIIK (195 aa). 181-232 contacts ATP; sequence MKRPYVIKPITQGSSIGIEVIFEEDDFNFANYDFPYGDQVIIEKYIKGRELQ. Mg(2+) is bound by residues Glu301, Glu315, and Asn317.

It belongs to the D-alanine--D-alanine ligase family. It depends on Mg(2+) as a cofactor. Mn(2+) serves as cofactor.

It localises to the cytoplasm. The catalysed reaction is 2 D-alanine + ATP = D-alanyl-D-alanine + ADP + phosphate + H(+). It participates in cell wall biogenesis; peptidoglycan biosynthesis. Functionally, cell wall formation. This chain is D-alanine--D-alanine ligase, found in Rickettsia canadensis (strain McKiel).